Reading from the N-terminus, the 284-residue chain is Tropomyosin (284 aa).

The stretch at 1–284 forms a coiled coil; the sequence is MDGIKKKMIA…DQTFAELTGY (284 aa). The segment at 111–131 is disordered; the sequence is TKLEEASKTAEESERGRKDLE.

The protein belongs to the tropomyosin family. In terms of assembly, homodimer.

Tropomyosin, in association with the troponin complex, plays a central role in the calcium dependent regulation of muscle contraction. The chain is Tropomyosin from Schistosoma haematobium (Blood fluke).